Consider the following 380-residue polypeptide: ER-phagy receptor 1 (380 aa).

Positions 9 to 74 constitute a J domain; it reads DCYEILQVNH…DKRKWHEKDY (66 aa). A C2H2-type zinc finger spans residues 270-294; that stretch reads IMCMVCNKNFRSQNQLENHENSKKH. Residues 307 to 337 are disordered; sequence KHAKEAQKNAESNKQPEDAPSESPYSNKVSS. Phosphoserine is present on S344. The AIM motif lies at 352–355; that stretch reads FTFV. The FFAT signature appears at 361–367; sequence EFYTASE.

As to quaternary structure, interacts (via the AIM motif) with atg8. Interacts (via the FFAT motif) with the vesicle-associated membrane protein-associated protein (VAP) family proteins scs2 and scs22.

It localises to the endoplasmic reticulum. The protein localises to the preautophagosomal structure. Its function is as follows. Reticulophagy receptor required for autophagosomal sequestration of endoplasmic reticulum (ER) membranes during ER stress. Confers resistance to ER stress by promoting the autophagic degradation of the ER (ER-phagy or reticulophagy). Acts as a bridging molecule to mediate the association between atg8 on the autophagic membrane and the vesicle-associated membrane protein-associated proteins (VAPs) scs2 and scs22 on the ER. May play a role in meiosis. The protein is ER-phagy receptor 1 of Schizosaccharomyces pombe (strain 972 / ATCC 24843) (Fission yeast).